The primary structure comprises 260 residues: Methionine-rich nacre protein (260 aa).

The signal sequence occupies residues 1-19; that stretch reads MRRILCLAVVIFIINDVSS. The segment at 23-75 is disordered; that stretch reads GSNKNWKKSGMSLSSPGNKKPTGNNNAVPQKSKMNNVNQNSLSQPKRPSHPGN. A compositionally biased stretch (polar residues) spans 33 to 68; that stretch reads MSLSSPGNKKPTGNNNAVPQKSKMNNVNQNSLSQPK.

Expressed in mantle distal zone, mantle margin and grafted pearl pockets. Not expressed in adductor muscle, gills, hemocytes or ungrafted pearl pockets. Within the mantle, specifically expressed in mineralizing outer epithelium cells (at protein level). After secretion incorporated into acid-insoluble nacre matrix of shell and pearl (at protein level). Not found in acid-insoluble matrix of shell prisms (at protein level).

The protein localises to the secreted. In Margaritifera margaritifera (Freshwater pearl mussel), this protein is Methionine-rich nacre protein.